A 206-amino-acid chain; its full sequence is Orotate phosphoribosyltransferase (206 aa).

Residues Lys26, 72–73, Arg99, Lys100, Lys103, His105, and 124–132 each bind 5-phospho-alpha-D-ribose 1-diphosphate; these read YK and DDVMTSGFS. Orotate contacts are provided by Thr128 and Arg157.

The protein belongs to the purine/pyrimidine phosphoribosyltransferase family. PyrE subfamily. In terms of assembly, homodimer. Mg(2+) serves as cofactor.

The enzyme catalyses orotidine 5'-phosphate + diphosphate = orotate + 5-phospho-alpha-D-ribose 1-diphosphate. It participates in pyrimidine metabolism; UMP biosynthesis via de novo pathway; UMP from orotate: step 1/2. In terms of biological role, catalyzes the transfer of a ribosyl phosphate group from 5-phosphoribose 1-diphosphate to orotate, leading to the formation of orotidine monophosphate (OMP). This is Orotate phosphoribosyltransferase from Buchnera aphidicola subsp. Baizongia pistaciae (strain Bp).